We begin with the raw amino-acid sequence, 416 residues long: Gamma-glutamyl phosphate reductase (416 aa).

Belongs to the gamma-glutamyl phosphate reductase family.

The protein resides in the cytoplasm. It catalyses the reaction L-glutamate 5-semialdehyde + phosphate + NADP(+) = L-glutamyl 5-phosphate + NADPH + H(+). It functions in the pathway amino-acid biosynthesis; L-proline biosynthesis; L-glutamate 5-semialdehyde from L-glutamate: step 2/2. In terms of biological role, catalyzes the NADPH-dependent reduction of L-glutamate 5-phosphate into L-glutamate 5-semialdehyde and phosphate. The product spontaneously undergoes cyclization to form 1-pyrroline-5-carboxylate. The protein is Gamma-glutamyl phosphate reductase of Streptococcus thermophilus (strain CNRZ 1066).